The primary structure comprises 345 residues: Phosphoribosylformylglycinamidine cyclo-ligase (345 aa).

The protein belongs to the AIR synthase family.

The protein resides in the cytoplasm. The enzyme catalyses 2-formamido-N(1)-(5-O-phospho-beta-D-ribosyl)acetamidine + ATP = 5-amino-1-(5-phospho-beta-D-ribosyl)imidazole + ADP + phosphate + H(+). Its pathway is purine metabolism; IMP biosynthesis via de novo pathway; 5-amino-1-(5-phospho-D-ribosyl)imidazole from N(2)-formyl-N(1)-(5-phospho-D-ribosyl)glycinamide: step 2/2. This is Phosphoribosylformylglycinamidine cyclo-ligase from Bifidobacterium longum subsp. infantis (strain ATCC 15697 / DSM 20088 / JCM 1222 / NCTC 11817 / S12).